Consider the following 143-residue polypeptide: Flagellar assembly factor FliW (143 aa).

The protein belongs to the FliW family. In terms of assembly, interacts with translational regulator CsrA and flagellin(s).

Its subcellular location is the cytoplasm. In terms of biological role, acts as an anti-CsrA protein, binds CsrA and prevents it from repressing translation of its target genes, one of which is flagellin. Binds to flagellin and participates in the assembly of the flagellum. This is Flagellar assembly factor FliW from Clostridium botulinum (strain Langeland / NCTC 10281 / Type F).